The chain runs to 760 residues: Rho GTPase-activating protein 26 (760 aa).

The 256-residue stretch at 7 to 262 (EFSECCLDSP…MKENPHEHKN (256 aa)) folds into the BAR domain. The PH domain maps to 265-369 (PYTMEGYLYV…WMEAMDGREP (105 aa)). The region spanning 383 to 568 (AQLDSIGFSI…ILIENHEKIF (186 aa)) is the Rho-GAP domain. Disordered stretches follow at residues 571 to 617 (VPET…ESRN) and 658 to 701 (PNRP…SPIS). Positions 605–617 (HTAQPNEKQESRN) are enriched in polar residues. Low complexity predominate over residues 674–701 (LSPSWPMFSAPSSPMPTSSTSSDSSPIS). The 59-residue stretch at 702 to 760 (SPLRKARALYACKAEHDSELSFTAGTVFDNVHPSQEPGWLEGTLNGKTGLIPENYVEFL) folds into the SH3 domain.

Binds to the C-terminus of PTK2/FAK1. In terms of tissue distribution, detected in embryonic brain and liver, and at low levels in embryonic eye, heart, lung, intestine and skeletal muscle.

Its subcellular location is the cell junction. It is found in the focal adhesion. It localises to the cytoplasm. The protein resides in the cytoskeleton. The protein localises to the endosome membrane. Functionally, GTPase-activating protein for RHOA and CDC42. May be involved in the regulation of neosynthesized protein export through a Rab-endososomal dependent export route. This Gallus gallus (Chicken) protein is Rho GTPase-activating protein 26 (ARHGAP26).